The sequence spans 344 residues: DNA-directed RNA polymerase subunit alpha (344 aa).

Residues 1–232 (MGQYTINLRE…HLFLPPFGLE (232 aa)) form an alpha N-terminal domain (alpha-NTD) region. Positions 270–344 (LIKDQFLEYS…KRFGINLKLK (75 aa)) are alpha C-terminal domain (alpha-CTD).

Belongs to the RNA polymerase alpha chain family. In terms of assembly, in plastids the minimal PEP RNA polymerase catalytic core is composed of four subunits: alpha, beta, beta', and beta''. When a (nuclear-encoded) sigma factor is associated with the core the holoenzyme is formed, which can initiate transcription.

Its subcellular location is the plastid. It is found in the chloroplast. The catalysed reaction is RNA(n) + a ribonucleoside 5'-triphosphate = RNA(n+1) + diphosphate. In terms of biological role, DNA-dependent RNA polymerase catalyzes the transcription of DNA into RNA using the four ribonucleoside triphosphates as substrates. This is DNA-directed RNA polymerase subunit alpha from Spirogyra maxima (Green alga).